A 395-amino-acid chain; its full sequence is Elongation factor Tu (395 aa).

The tr-type G domain maps to 10-204 (KPHVNIGTIG…AVDEYIPTPQ (195 aa)). Residues 19–26 (GHVDHGKT) form a G1 region. Residue 19 to 26 (GHVDHGKT) coordinates GTP. Thr26 serves as a coordination point for Mg(2+). Residues 60–64 (GITIS) are G2. The G3 stretch occupies residues 81-84 (DCPG). Residues 81-85 (DCPGH) and 136-139 (NKCD) each bind GTP. Residues 136–139 (NKCD) are G4. Residues 174-176 (SAL) are G5.

This sequence belongs to the TRAFAC class translation factor GTPase superfamily. Classic translation factor GTPase family. EF-Tu/EF-1A subfamily. In terms of assembly, monomer.

It is found in the cytoplasm. The catalysed reaction is GTP + H2O = GDP + phosphate + H(+). Its function is as follows. GTP hydrolase that promotes the GTP-dependent binding of aminoacyl-tRNA to the A-site of ribosomes during protein biosynthesis. This chain is Elongation factor Tu, found in Anoxybacillus flavithermus (strain DSM 21510 / WK1).